The sequence spans 267 residues: Cerberus (267 aa).

The first 17 residues, 1–17 (MHLLLFQLLVLLPLGKT), serve as a signal peptide directing secretion. 2 disordered regions span residues 19–52 (RHQD…EAEE) and 87–113 (WKKP…QSLI). An N-linked (GlcNAc...) asparagine glycan is attached at Asn-26. The segment covering 88-101 (KKPEREMHPSRDSD) has biased composition (basic and acidic residues). Cystine bridges form between Cys-162/Cys-209, Cys-176/Cys-223, Cys-186/Cys-239, and Cys-190/Cys-241. Positions 162-246 (CRTVPFSQTI…EECQCKVKTE (85 aa)) constitute a CTCK domain. Asn-222 carries N-linked (GlcNAc...) asparagine glycosylation.

It belongs to the DAN family. In terms of assembly, forms monomers and predominantly dimers. Post-translationally, N-glycosylated.

The protein localises to the secreted. In terms of biological role, cytokine that may play a role in anterior neural induction and somite formation during embryogenesis in part through a BMP-inhibitory mechanism. Can regulate Nodal signaling during gastrulation as well as the formation and patterning of the primitive streak. The polypeptide is Cerberus (CER1) (Homo sapiens (Human)).